Reading from the N-terminus, the 357-residue chain is Multiple sugar-binding periplasmic protein SbpA (357 aa).

Residues 1-20 form the signal peptide; sequence MSSSFTTTLAGMAVGMLVLA.

Belongs to the bacterial solute-binding protein 2 family.

It localises to the periplasm. Functionally, mediates chemotaxis towards D-galactose, L-arabinose and D-fucose but not towards D-fructose. Probably part of a binding-protein high affinity uptake system. This Azospirillum brasilense protein is Multiple sugar-binding periplasmic protein SbpA (sbpA).